Here is a 300-residue protein sequence, read N- to C-terminus: MAFKSGFVALIGRPNVGKSTLMNYFVGKKISIISPKPQTTRNSIKGILTLDDAQIIFIDTPGVHPPKNKLGEYMVKVSEKTLKEVDLILYIVEAIDSGIGPWDEAILEKLKEVQTPKILVLNKADLASKENIEILKSLFSGRLSFEFIIEIAAINGYNCDVLLEKIKKLLPEGPKYYLDDMTTDVRESFIVSEIIREKILLNLSEEVPHGVGVSVERFSEREDKDILDIEATIYCEKESHKAIIIGKGGQMLKKIGMQAREELEMLFGIKVNLQLWVKVKKNWRDDIAAMKMLGYNLKEV.

The 169-residue stretch at 4–172 (KSGFVALIGR…LEKIKKLLPE (169 aa)) folds into the Era-type G domain. The G1 stretch occupies residues 12-19 (GRPNVGKS). 12–19 (GRPNVGKS) is a binding site for GTP. Residues 38-42 (QTTRN) are G2. Residues 59 to 62 (DTPG) are G3. GTP-binding positions include 59–63 (DTPGV) and 122–125 (NKAD). A G4 region spans residues 122–125 (NKAD). The tract at residues 151 to 153 (IAA) is G5. The KH type-2 domain occupies 195–281 (IREKILLNLS…NLQLWVKVKK (87 aa)).

This sequence belongs to the TRAFAC class TrmE-Era-EngA-EngB-Septin-like GTPase superfamily. Era GTPase family. Monomer.

The protein resides in the cytoplasm. The protein localises to the cell membrane. Its function is as follows. An essential GTPase that binds both GDP and GTP, with rapid nucleotide exchange. Plays a role in 16S rRNA processing and 30S ribosomal subunit biogenesis and possibly also in cell cycle regulation and energy metabolism. This Caldicellulosiruptor saccharolyticus (strain ATCC 43494 / DSM 8903 / Tp8T 6331) protein is GTPase Era.